The following is a 202-amino-acid chain: Holliday junction branch migration complex subunit RuvA (202 aa).

The segment at 1–64 is domain I; it reads MIDYVSGTLV…EDDESLYGFA (64 aa). The tract at residues 65–143 is domain II; the sequence is TKAERTVFET…DLDVLEDTSP (79 aa). The segment at 144 to 149 is flexible linker; sequence LSGGSD. Positions 150–202 are domain III; the sequence is ARAEARADALEALTELGLSKADAERSIRQVLRDNAGIQSADELVRRALKADQE.

The protein belongs to the RuvA family. In terms of assembly, homotetramer. Forms an RuvA(8)-RuvB(12)-Holliday junction (HJ) complex. HJ DNA is sandwiched between 2 RuvA tetramers; dsDNA enters through RuvA and exits via RuvB. An RuvB hexamer assembles on each DNA strand where it exits the tetramer. Each RuvB hexamer is contacted by two RuvA subunits (via domain III) on 2 adjacent RuvB subunits; this complex drives branch migration. In the full resolvosome a probable DNA-RuvA(4)-RuvB(12)-RuvC(2) complex forms which resolves the HJ.

The protein localises to the cytoplasm. The RuvA-RuvB-RuvC complex processes Holliday junction (HJ) DNA during genetic recombination and DNA repair, while the RuvA-RuvB complex plays an important role in the rescue of blocked DNA replication forks via replication fork reversal (RFR). RuvA specifically binds to HJ cruciform DNA, conferring on it an open structure. The RuvB hexamer acts as an ATP-dependent pump, pulling dsDNA into and through the RuvAB complex. HJ branch migration allows RuvC to scan DNA until it finds its consensus sequence, where it cleaves and resolves the cruciform DNA. This chain is Holliday junction branch migration complex subunit RuvA, found in Salinibacter ruber (strain DSM 13855 / M31).